The primary structure comprises 147 residues: S-protein homolog 10 (147 aa).

The N-terminal stretch at 1-20 is a signal peptide; it reads MNCFSYFFLVIILCAGLNNA.

This sequence belongs to the plant self-incompatibility (S1) protein family.

It is found in the secreted. The sequence is that of S-protein homolog 10 from Arabidopsis thaliana (Mouse-ear cress).